Here is a 1105-residue protein sequence, read N- to C-terminus: ATP-dependent DNA helicase MPH1 (1105 aa).

The Helicase ATP-binding domain occupies 94–261 (IVQRAFYDNL…EIIDNLSISK (168 aa)). 107-114 (LPTGLGKT) contacts ATP. Residues 209-212 (DEAH) carry the DEAH box motif. Residues 468 to 641 (SIERIGSNLR…LITLAQSNRI (174 aa)) enclose the Helicase C-terminal domain. Disordered stretches follow at residues 493 to 534 (EEAY…AQIK), 684 to 708 (KGKKVTKSKSKSKSNSKSKKIEKRF), 758 to 824 (IQSK…PKLG), 850 to 880 (LVTGKSTSPPENVAEKRNSPILNSSNRECAP), and 918 to 953 (VSDDEKSVEDSINNQQLHKNKNLGSTSDDDDAFDEG). The span at 499–511 (KGKKGRTKGKATK) shows a compositional bias: basic residues. Over residues 518–532 (TPERSTSRTSSEDAQ) the composition is skewed to basic and acidic residues. Residues 684-705 (KGKKVTKSKSKSKSNSKSKKIE) are compositionally biased toward basic residues. Over residues 764 to 787 (PVKENQSKRPNSEHICEEDSRQET) the composition is skewed to basic and acidic residues. Low complexity predominate over residues 788-799 (ENNSNESNGSFE). Residues 927 to 943 (DSINNQQLHKNKNLGST) show a composition bias toward polar residues. Residues 944–953 (SDDDDAFDEG) are compositionally biased toward acidic residues.

It belongs to the DEAD box helicase family. DEAH subfamily. FANCM sub-subfamily. Interacts with the MHF histone-fold complex to form the FANCM-MHF complex.

It localises to the nucleus. It catalyses the reaction ATP + H2O = ADP + phosphate + H(+). In terms of biological role, ATP-dependent DNA helicase involved in DNA damage repair by homologous recombination and in genome maintenance. Capable of unwinding D-loops. Plays a role in limiting crossover recombinants during mitotic DNA double-strand break (DSB) repair. Component of a FANCM-MHF complex which promotes gene conversion at blocked replication forks, probably by reversal of the stalled fork. The chain is ATP-dependent DNA helicase MPH1 from Debaryomyces hansenii (strain ATCC 36239 / CBS 767 / BCRC 21394 / JCM 1990 / NBRC 0083 / IGC 2968) (Yeast).